Reading from the N-terminus, the 269-residue chain is Subtilisin BL (269 aa).

Glutamine 2 serves as a coordination point for Ca(2+). The region spanning 5–268 (PWGISRVQAP…SGLVNAEAAT (264 aa)) is the Peptidase S8 domain. Residue aspartate 32 is the Charge relay system of the active site. Aspartate 40 lines the Ca(2+) pocket. Catalysis depends on histidine 62, which acts as the Charge relay system. The Ca(2+) site is built by leucine 73, asparagine 75, isoleucine 77, valine 79, alanine 163, tyrosine 165, and alanine 168. Residue serine 215 is the Charge relay system of the active site.

It belongs to the peptidase S8 family. Ca(2+) is required as a cofactor.

Its subcellular location is the secreted. The enzyme catalyses Hydrolysis of proteins with broad specificity for peptide bonds, and a preference for a large uncharged residue in P1. Hydrolyzes peptide amides.. Subtilisin is an extracellular alkaline serine protease, it catalyzes the hydrolysis of proteins and peptide amides. The protein is Subtilisin BL of Lederbergia lenta (Bacillus lentus).